The following is a 154-amino-acid chain: MTEEQRGVPLSELSLQQLGELQKNCEQELTFFQDSFNALKALLSRNEKSISALEDVKVGTAGHTALIPLSESLYIRAELSDPNKHMVEIGTGYFVELDREKAKGIFDRKKEHIAKQVETVEGILKEKRRTRAYISDAFQTKVQAQLANMNTQQS.

It belongs to the prefoldin subunit alpha family. In terms of assembly, heterohexamer of two PFD-alpha type and four PFD-beta type subunits.

Binds specifically to cytosolic chaperonin (c-CPN) and transfers target proteins to it. Binds to nascent polypeptide chain and promotes folding in an environment in which there are many competing pathways for nonnative proteins. This chain is Probable prefoldin subunit 5, found in Caenorhabditis briggsae.